The primary structure comprises 476 residues: FAD-dependent monooxygenase prhF (476 aa).

Residues E41, G55, and R114 each contribute to the FAD site. Y222 is a catalytic residue. FAD-binding residues include D314 and A327. The N-linked (GlcNAc...) asparagine glycan is linked to N343. The helical transmembrane segment at 447 to 467 threads the bilayer; that stretch reads LGSTPIQMLTLLLPCLFYFMY. An N-linked (GlcNAc...) asparagine glycan is attached at N471.

The protein belongs to the paxM FAD-dependent monooxygenase family. It depends on FAD as a cofactor.

The protein resides in the membrane. The protein operates within secondary metabolite biosynthesis; terpenoid biosynthesis. FAD-dependent monooxygenase; part of the gene cluster that mediates the biosynthesis of paraherquonin, a meroterpenoid with a unique, highly congested hexacyclic molecular architecture. The first step of the pathway is the synthesis of 3,5-dimethylorsellinic acid (DMOA) by the polyketide synthase prhL. Synthesis of DMOA is followed by farnesylation by the prenyltransferase prhE, methylesterification by the methyl-transferase prhM, epoxidation of the prenyl chain by the flavin-dependent monooxygenase prhF, and cyclization of the farnesyl moiety by the terpene cyclase prhH, to yield the tetracyclic intermediate, protoaustinoid A. The short chain dehydrogenase prhI then oxidizes the C-3 alcohol group of the terpene cyclase product to transform protoaustinoid A into protoaustinoid B. The FAD-binding monooxygenase prhJ catalyzes the oxidation of protoaustinoid B into preaustinoid A which is further oxidized into preaustinoid A1 by FAD-binding monooxygenase phrK. Finally, prhA leads to berkeleydione via the berkeleyone B intermediate. PrhA is a multifunctional dioxygenase that first desaturates at C5-C6 to form berkeleyone B, followed by rearrangement of the A/B-ring to form the cycloheptadiene moiety in berkeleydione. Berkeleydione serves as the key intermediate for the biosynthesis of paraherquonin as well as many other meroterpenoids. The cytochrome P450 monooxygenases prhB, prhD, and prhN, as well as the isomerase prhC, are probably involved in the late stage of paraherquonin biosynthesis, after the production of berkeleydione. Especially prhC might be a multifunctional enzyme that catalyzes the D-ring expansion via intramolecular methoxy rearrangement, as well as the hydrolysis of the expanded D-ring. In Penicillium brasilianum, this protein is FAD-dependent monooxygenase prhF.